Reading from the N-terminus, the 246-residue chain is Sensory transduction protein LytT (246 aa).

The Response regulatory domain occupies 3-117; sequence KVLVVDDEML…RIVQTLKKYK (115 aa). The region spanning 142–246 is the HTH LytTR-type domain; it reads LALPIEESIV…AKELKKLLRI (105 aa).

In terms of processing, phosphorylated by LytS.

The protein localises to the cytoplasm. Functionally, member of the two-component regulatory system LytS/LytT that probably regulates genes involved in cell wall metabolism. The protein is Sensory transduction protein LytT (lytT) of Bacillus cereus (strain ATCC 14579 / DSM 31 / CCUG 7414 / JCM 2152 / NBRC 15305 / NCIMB 9373 / NCTC 2599 / NRRL B-3711).